The following is a 94-amino-acid chain: Selenoprotein K (94 aa).

The helical transmembrane segment at 20 to 42 threads the bilayer; that stretch reads LSLITDFFWGIAEFVVLFFKTLL. Residues 47 to 94 are disordered; the sequence is KKGRGYRNSSDSRYDDGRGPPGNPPRRMGRISHLHGPSPPPMAGGUGR. Residue Sec92 is a non-standard amino acid, selenocysteine.

This sequence belongs to the selenoprotein K family. In terms of assembly, interacts with DERL1, DERL2, DERL3 and SELENOS. The SELENOK-SELENOS complex interacts with VCP. Interacts with ZDHHC6. In terms of processing, cleaved by CAPN2/m-calpain in resting macrophages but not in activated macrophages. Macrophage activation up-regulates expression of the calpain inhibitor CAST/calpastatin, resulting in inhibition of CAPN2 activity. Post-translationally, truncated SELENOK proteins produced by failed UGA/Sec decoding are ubiquitinated by the CRL2(KLHDC2) complex, which recognizes the diglycine (Gly-Gly) at the C-terminus of truncated SELENOK proteins.

It is found in the endoplasmic reticulum membrane. The protein resides in the cell membrane. Its function is as follows. Required for Ca(2+) flux in immune cells and plays a role in T-cell proliferation and in T-cell and neutrophil migration. Involved in endoplasmic reticulum-associated degradation (ERAD) of soluble glycosylated proteins. Required for palmitoylation and cell surface expression of CD36 and involved in macrophage uptake of low-density lipoprotein and in foam cell formation. Together with ZDHHC6, required for palmitoylation of ITPR1 in immune cells, leading to regulate ITPR1 stability and function. Plays a role in protection of cells from ER stress-induced apoptosis. Protects cells from oxidative stress when overexpressed in cardiomyocytes. The chain is Selenoprotein K from Chinchilla lanigera (Long-tailed chinchilla).